Consider the following 1155-residue polypeptide: Eukaryotic translation initiation factor 3 subunit A (1155 aa).

The PCI domain occupies 319 to 502 (LQRMAAHVLL…NSIYFGTDLT (184 aa)). Disordered stretches follow at residues 589 to 613 (QNNA…LAEQ) and 836 to 1155 (AAEA…VKRR). 4 stretches are compositionally biased toward basic and acidic residues: residues 836–900 (AAEA…RGGD), 925–987 (DRNE…EPDS), 1004–1057 (SRDD…DAAP), and 1066–1101 (DAPR…RAPK). Positions 1104–1118 (GPSGGTGTAASGGGN) are enriched in gly residues. Residues 1125–1145 (PRDEPAPKRDQPQDKENKAVD) show a composition bias toward basic and acidic residues.

The protein belongs to the eIF-3 subunit A family. Component of the eukaryotic translation initiation factor 3 (eIF-3) complex. The eIF-3 complex interacts with pix.

It is found in the cytoplasm. RNA-binding component of the eukaryotic translation initiation factor 3 (eIF-3) complex, which is involved in protein synthesis of a specialized repertoire of mRNAs and, together with other initiation factors, stimulates binding of mRNA and methionyl-tRNAi to the 40S ribosome. The eIF-3 complex specifically targets and initiates translation of a subset of mRNAs involved in cell proliferation. The sequence is that of Eukaryotic translation initiation factor 3 subunit A from Drosophila pseudoobscura pseudoobscura (Fruit fly).